A 268-amino-acid polypeptide reads, in one-letter code: Ribosomal RNA small subunit methyltransferase A (268 aa).

S-adenosyl-L-methionine-binding residues include N16, L18, G43, E64, D89, and N110.

The protein belongs to the class I-like SAM-binding methyltransferase superfamily. rRNA adenine N(6)-methyltransferase family. RsmA subfamily.

It localises to the cytoplasm. It catalyses the reaction adenosine(1518)/adenosine(1519) in 16S rRNA + 4 S-adenosyl-L-methionine = N(6)-dimethyladenosine(1518)/N(6)-dimethyladenosine(1519) in 16S rRNA + 4 S-adenosyl-L-homocysteine + 4 H(+). Its function is as follows. Specifically dimethylates two adjacent adenosines (A1518 and A1519) in the loop of a conserved hairpin near the 3'-end of 16S rRNA in the 30S particle. May play a critical role in biogenesis of 30S subunits. The protein is Ribosomal RNA small subunit methyltransferase A of Pseudomonas aeruginosa (strain ATCC 15692 / DSM 22644 / CIP 104116 / JCM 14847 / LMG 12228 / 1C / PRS 101 / PAO1).